We begin with the raw amino-acid sequence, 93 residues long: Small ribosomal subunit protein uS19 (93 aa).

This sequence belongs to the universal ribosomal protein uS19 family.

Functionally, protein S19 forms a complex with S13 that binds strongly to the 16S ribosomal RNA. The chain is Small ribosomal subunit protein uS19 from Ruminiclostridium cellulolyticum (strain ATCC 35319 / DSM 5812 / JCM 6584 / H10) (Clostridium cellulolyticum).